Here is a 444-residue protein sequence, read N- to C-terminus: Glutamyl-tRNA reductase (444 aa).

Substrate is bound by residues 49-52, serine 109, 114-116, and glutamine 120; these read TCNR and ETQ. The Nucleophile role is filled by cysteine 50. Residue 189–194 participates in NADP(+) binding; that stretch reads GAGKMG.

This sequence belongs to the glutamyl-tRNA reductase family. Homodimer.

The catalysed reaction is (S)-4-amino-5-oxopentanoate + tRNA(Glu) + NADP(+) = L-glutamyl-tRNA(Glu) + NADPH + H(+). It functions in the pathway porphyrin-containing compound metabolism; protoporphyrin-IX biosynthesis; 5-aminolevulinate from L-glutamyl-tRNA(Glu): step 1/2. Catalyzes the NADPH-dependent reduction of glutamyl-tRNA(Glu) to glutamate 1-semialdehyde (GSA). The chain is Glutamyl-tRNA reductase from Bacillus cereus (strain ATCC 10987 / NRS 248).